The chain runs to 784 residues: E3 UFM1-protein ligase 1 homolog (784 aa).

The span at 398–414 (QEVDHGVMEEEKADKRE) shows a compositional bias: basic and acidic residues. A disordered region spans residues 398-472 (QEVDHGVMEE…ASNKKGGKDP (75 aa)).

It belongs to the UFL1 family.

Its function is as follows. E3 UFM1-protein ligase that mediates ufmylation of target proteins. The chain is E3 UFM1-protein ligase 1 homolog from Anopheles gambiae (African malaria mosquito).